A 429-amino-acid chain; its full sequence is Adenylosuccinate synthetase (429 aa).

Residues 12 to 18 (GDEGKGK) and 40 to 42 (GHT) each bind GTP. Asp13 serves as the catalytic Proton acceptor. Residues Asp13 and Gly40 each coordinate Mg(2+). IMP is bound by residues 13 to 16 (DEGK), 38 to 41 (NAGH), Thr128, Arg142, Gln223, Thr238, and Arg302. The active-site Proton donor is the His41. 298–304 (VNTGRKR) lines the substrate pocket. Residues Arg304, 330-332 (KLD), and 412-414 (GVG) each bind GTP.

It belongs to the adenylosuccinate synthetase family. Homodimer. Requires Mg(2+) as cofactor.

It localises to the cytoplasm. It catalyses the reaction IMP + L-aspartate + GTP = N(6)-(1,2-dicarboxyethyl)-AMP + GDP + phosphate + 2 H(+). It functions in the pathway purine metabolism; AMP biosynthesis via de novo pathway; AMP from IMP: step 1/2. In terms of biological role, plays an important role in the de novo pathway of purine nucleotide biosynthesis. Catalyzes the first committed step in the biosynthesis of AMP from IMP. In Corynebacterium efficiens (strain DSM 44549 / YS-314 / AJ 12310 / JCM 11189 / NBRC 100395), this protein is Adenylosuccinate synthetase.